A 157-amino-acid polypeptide reads, in one-letter code: Transcriptional repressor NrdR (157 aa).

Residues 3–34 fold into a zinc finger; that stretch reads CPFCRHPDSRVVDSRTSDDGLSIRRRRQCPEC. Positions 46–136 constitute an ATP-cone domain; that stretch reads LSVIKRNGVV…VYQGFDSLDD (91 aa).

Belongs to the NrdR family. Zn(2+) serves as cofactor.

In terms of biological role, negatively regulates transcription of bacterial ribonucleotide reductase nrd genes and operons by binding to NrdR-boxes. The polypeptide is Transcriptional repressor NrdR (Clavibacter michiganensis subsp. michiganensis (strain NCPPB 382)).